Reading from the N-terminus, the 456-residue chain is Imidazolonepropionase (456 aa).

Fe(3+) contacts are provided by histidine 104 and histidine 106. Zn(2+)-binding residues include histidine 104 and histidine 106. 4-imidazolone-5-propanoate contacts are provided by arginine 113, tyrosine 176, and histidine 209. Tyrosine 176 contributes to the N-formimidoyl-L-glutamate binding site. Histidine 274 is a binding site for Fe(3+). Zn(2+) is bound at residue histidine 274. Residue glutamine 277 participates in 4-imidazolone-5-propanoate binding. Residue aspartate 349 coordinates Fe(3+). Aspartate 349 contacts Zn(2+). Residues asparagine 351 and glycine 353 each contribute to the N-formimidoyl-L-glutamate site. Serine 354 provides a ligand contact to 4-imidazolone-5-propanoate.

Belongs to the metallo-dependent hydrolases superfamily. HutI family. Requires Zn(2+) as cofactor. Fe(3+) is required as a cofactor.

Its subcellular location is the cytoplasm. It catalyses the reaction 4-imidazolone-5-propanoate + H2O = N-formimidoyl-L-glutamate. Its pathway is amino-acid degradation; L-histidine degradation into L-glutamate; N-formimidoyl-L-glutamate from L-histidine: step 3/3. In terms of biological role, catalyzes the hydrolytic cleavage of the carbon-nitrogen bond in imidazolone-5-propanoate to yield N-formimidoyl-L-glutamate. It is the third step in the universal histidine degradation pathway. In Verminephrobacter eiseniae (strain EF01-2), this protein is Imidazolonepropionase.